The chain runs to 402 residues: Secondary metabolism regulator laeA (402 aa).

A disordered region spans residues 1 to 70; that stretch reads MSLKYYLNDL…MSPTEVCSTD (70 aa). A compositionally biased stretch (acidic residues) spans 11–21; that stretch reads SDSDSESESEC.

Belongs to the methyltransferase superfamily. LaeA methyltransferase family.

It is found in the nucleus. It carries out the reaction L-methionyl-[protein] + S-adenosyl-L-methionine = S-methyl-L-methionyl-[protein] + S-adenosyl-L-homocysteine. In terms of biological role, methyltransferase that performs automethylation. No other methyl-accepting substrate has been identified yet. Acts as a global regulator for secondary metabolite gene expression. Negatively regulates the production of coprinoferrin, a structurally novel acylated tripeptide hydroxamate siderophore. The sequence is that of Secondary metabolism regulator laeA from Coprinopsis cinerea (strain Okayama-7 / 130 / ATCC MYA-4618 / FGSC 9003) (Inky cap fungus).